Here is a 957-residue protein sequence, read N- to C-terminus: Glycine dehydrogenase (decarboxylating) (957 aa).

N6-(pyridoxal phosphate)lysine is present on K704.

It belongs to the GcvP family. The glycine cleavage system is composed of four proteins: P, T, L and H. The cofactor is pyridoxal 5'-phosphate.

The enzyme catalyses N(6)-[(R)-lipoyl]-L-lysyl-[glycine-cleavage complex H protein] + glycine + H(+) = N(6)-[(R)-S(8)-aminomethyldihydrolipoyl]-L-lysyl-[glycine-cleavage complex H protein] + CO2. In terms of biological role, the glycine cleavage system catalyzes the degradation of glycine. The P protein binds the alpha-amino group of glycine through its pyridoxal phosphate cofactor; CO(2) is released and the remaining methylamine moiety is then transferred to the lipoamide cofactor of the H protein. This chain is Glycine dehydrogenase (decarboxylating), found in Bordetella petrii (strain ATCC BAA-461 / DSM 12804 / CCUG 43448).